Here is a 21-residue protein sequence, read N- to C-terminus: 40 kDa major outer membrane protein (21 aa).

Disulfide bond interactions within and between MOMP molecules and other components form high molecular-weight oligomers.

Its subcellular location is the cell outer membrane. Its function is as follows. Structural rigidity of the outer membrane of elementary bodies and porin forming, permitting diffusion of solutes through the intracellular reticulate body membrane. This Actinobacillus pleuropneumoniae (Haemophilus pleuropneumoniae) protein is 40 kDa major outer membrane protein.